A 337-amino-acid chain; its full sequence is RNA 3'-terminal phosphate cyclase (337 aa).

ATP-binding positions include Gln100 and 281–285 (YMGDQ). The active-site Tele-AMP-histidine intermediate is His306.

This sequence belongs to the RNA 3'-terminal cyclase family. Type 1 subfamily.

Its subcellular location is the cytoplasm. The catalysed reaction is a 3'-end 3'-phospho-ribonucleotide-RNA + ATP = a 3'-end 2',3'-cyclophospho-ribonucleotide-RNA + AMP + diphosphate. Functionally, catalyzes the conversion of 3'-phosphate to a 2',3'-cyclic phosphodiester at the end of RNA. The mechanism of action of the enzyme occurs in 3 steps: (A) adenylation of the enzyme by ATP; (B) transfer of adenylate to an RNA-N3'P to produce RNA-N3'PP5'A; (C) and attack of the adjacent 2'-hydroxyl on the 3'-phosphorus in the diester linkage to produce the cyclic end product. The biological role of this enzyme is unknown but it is likely to function in some aspects of cellular RNA processing. The polypeptide is RNA 3'-terminal phosphate cyclase (rtcA) (Methanothermobacter thermautotrophicus (strain ATCC 29096 / DSM 1053 / JCM 10044 / NBRC 100330 / Delta H) (Methanobacterium thermoautotrophicum)).